A 354-amino-acid polypeptide reads, in one-letter code: tRNA pseudouridine synthase D (354 aa).

Asp-86 (nucleophile) is an active-site residue. A TRUD domain is found at 162–309; the sequence is GVPNYFGPQR…LEVGRRALRL (148 aa).

This sequence belongs to the pseudouridine synthase TruD family.

It catalyses the reaction uridine(13) in tRNA = pseudouridine(13) in tRNA. Functionally, responsible for synthesis of pseudouridine from uracil-13 in transfer RNAs. This Methylococcus capsulatus (strain ATCC 33009 / NCIMB 11132 / Bath) protein is tRNA pseudouridine synthase D.